Here is a 510-residue protein sequence, read N- to C-terminus: Probable gamma-aminobutyrate transaminase 3, mitochondrial (510 aa).

The N-terminal 41 residues, 1–41 (MICRSLLLLRSNAASKASSIVKHVAATGCLPEYSSEAPARY), are a transit peptide targeting the mitochondrion. Residue 166–167 (GS) coordinates pyridoxal 5'-phosphate. Tyr-199 contributes to the substrate binding site. Asp-306 serves as a coordination point for pyridoxal 5'-phosphate. Lys-335 is a substrate binding site. Lys-335 carries the post-translational modification N6-(pyridoxal phosphate)lysine.

The protein belongs to the class-III pyridoxal-phosphate-dependent aminotransferase family.

The protein resides in the mitochondrion. The catalysed reaction is 4-aminobutanoate + pyruvate = succinate semialdehyde + L-alanine. The enzyme catalyses 4-aminobutanoate + glyoxylate = succinate semialdehyde + glycine. In terms of biological role, transaminase that degrades gamma-amino butyric acid (GABA). This is Probable gamma-aminobutyrate transaminase 3, mitochondrial from Oryza sativa subsp. indica (Rice).